Consider the following 410-residue polypeptide: LIMR family protein SELMODRAFT_432208 (410 aa).

The next 5 membrane-spanning stretches (helical) occupy residues 30 to 50, 67 to 87, 129 to 149, 156 to 176, and 179 to 199; these read LWWA…IFFY, LWVV…YAVI, VTLM…LTTL, ICLD…NTII, and ILFM…LIFA. Positions 245 to 274 form a coiled coil; that stretch reads RMFRKNVKKVQQELVFLEDDVEALNEAFPQ. A run of 2 helical transmembrane segments spans residues 288–308 and 330–350; these read LVFG…IIVF and GGLL…MSVI. The span at 389-400 shows a compositional bias: low complexity; it reads PSSAMDSSSWSA. Residues 389–410 are disordered; sequence PSSAMDSSSWSADRPCRPWPWP.

This sequence belongs to the LIMR family.

It is found in the membrane. In Selaginella moellendorffii (Spikemoss), this protein is LIMR family protein SELMODRAFT_432208.